We begin with the raw amino-acid sequence, 369 residues long: uncharacterized protein (369 aa).

An N-terminal signal peptide occupies residues 1–19 (MKKLIAVAVLSACGSLAHA).

This is an uncharacterized protein from Haemophilus influenzae (strain ATCC 51907 / DSM 11121 / KW20 / Rd).